The following is a 576-amino-acid chain: Cyclic nucleotide-binding domain-containing protein 2 (576 aa).

116 to 239 (SYRNYAEPLQ…DAQYRFEFFR (124 aa)) is an a nucleoside 3',5'-cyclic phosphate binding site.

The protein localises to the cytoplasm. It is found in the cytosol. In terms of biological role, essential for male fertility. Plays an important role in spermatogenesis and regulates sperm motility by controlling the development of the flagellar bending of sperm. In Homo sapiens (Human), this protein is Cyclic nucleotide-binding domain-containing protein 2 (CNBD2).